A 435-amino-acid chain; its full sequence is Serine--tRNA ligase (435 aa).

240–242 (TAE) serves as a coordination point for L-serine. 271-273 (RSE) is a binding site for ATP. E294 lines the L-serine pocket. 358-361 (EISS) contributes to the ATP binding site. Residue S393 participates in L-serine binding.

Belongs to the class-II aminoacyl-tRNA synthetase family. Type-1 seryl-tRNA synthetase subfamily. In terms of assembly, homodimer. The tRNA molecule binds across the dimer.

The protein localises to the cytoplasm. The enzyme catalyses tRNA(Ser) + L-serine + ATP = L-seryl-tRNA(Ser) + AMP + diphosphate + H(+). It carries out the reaction tRNA(Sec) + L-serine + ATP = L-seryl-tRNA(Sec) + AMP + diphosphate + H(+). Its pathway is aminoacyl-tRNA biosynthesis; selenocysteinyl-tRNA(Sec) biosynthesis; L-seryl-tRNA(Sec) from L-serine and tRNA(Sec): step 1/1. In terms of biological role, catalyzes the attachment of serine to tRNA(Ser). Is also able to aminoacylate tRNA(Sec) with serine, to form the misacylated tRNA L-seryl-tRNA(Sec), which will be further converted into selenocysteinyl-tRNA(Sec). This is Serine--tRNA ligase from Cupriavidus metallidurans (strain ATCC 43123 / DSM 2839 / NBRC 102507 / CH34) (Ralstonia metallidurans).